Reading from the N-terminus, the 118-residue chain is Ribonuclease P protein component (118 aa).

It belongs to the RnpA family. In terms of assembly, consists of a catalytic RNA component (M1 or rnpB) and a protein subunit.

It carries out the reaction Endonucleolytic cleavage of RNA, removing 5'-extranucleotides from tRNA precursor.. Its function is as follows. RNaseP catalyzes the removal of the 5'-leader sequence from pre-tRNA to produce the mature 5'-terminus. It can also cleave other RNA substrates such as 4.5S RNA. The protein component plays an auxiliary but essential role in vivo by binding to the 5'-leader sequence and broadening the substrate specificity of the ribozyme. This Photobacterium profundum (strain SS9) protein is Ribonuclease P protein component.